The sequence spans 253 residues: Nurim homolog (253 aa).

At 1–2 (MT) the chain is on the nuclear side. Residues 3–30 (SIAKSIVLLASLATFAYSLYVVGSLMMF) form a helical membrane-spanning segment. Residues 31–56 (LSTPRSISKAHTWIFNLLDNKSRLQT) lie on the Perinuclear space side of the membrane. The chain crosses the membrane as a helical span at residues 57–78 (AYGPVVFDTLYLIGFIFQHSFL). The Nuclear segment spans residues 79 to 96 (KSAVVKKLLAKLGLSGAE). Residues 97 to 113 (RTIYSLTSSLCLHYLIV) traverse the membrane as a helical segment. The Perinuclear space portion of the chain corresponds to 114–132 (NWLPAQSIVLWQIDVEQSA). The chain crosses the membrane as a helical span at residues 133-161 (PLWWTFVITHGICWVVIFGGSLVMDLPEL). The Nuclear portion of the chain corresponds to 162–188 (LGVKQAYYDLKAYGPPISYKSGELRNL). The helical transmembrane segment at 189 to 207 (YAHVRHPSFVGLSVILFAT) threads the bilayer. The Perinuclear space segment spans residues 208–213 (NVMSVD). The chain crosses the membrane as a helical span at residues 214–231 (RLVMALLLTTYMYLAWST). At 232–253 (DQKDVAYQKIQLQRKKLELKAK) the chain is on the nuclear side.

It belongs to the nurim family.

The protein localises to the nucleus inner membrane. This chain is Nurim homolog (nrm), found in Drosophila melanogaster (Fruit fly).